Reading from the N-terminus, the 809-residue chain is Chorion peroxidase (809 aa).

An N-terminal signal peptide occupies residues 1–21 (MSRILFILLLLIVTQLSELQA). A propeptide spanning residues 22 to 223 (AAFSVRQNRF…KFTETPLAHH (202 aa)) is cleaved from the precursor. Positions 36–55 (DLQTPAPLATSTESSKKPEK) are disordered. N-linked (GlcNAc...) asparagine glycosylation occurs at Asn-110. N-acetylcysteine; in Chorion peroxidase light chain is present on Cys-224. Cys-230 and Cys-244 form a disulfide bridge. The Proton acceptor role is filled by His-320. Cysteines 448 and 457 form a disulfide. Residue His-568 coordinates heme b. Cys-765 and Cys-794 are joined by a disulfide.

It belongs to the peroxidase family. XPO subfamily. Heterodimer. It depends on heme b as a cofactor. Expressed at low levels in the germarium and early follicles. Expression becomes progressively stronger during vitellogenesis, and is highly expressed in germ cells and somatic cells. A subset of follicle cells, termed border cells (BC), exhibit a high level of expression.

The protein resides in the secreted. The catalysed reaction is 2 a phenolic donor + H2O2 = 2 a phenolic radical donor + 2 H2O. Required for ovarian follicle maturation. Involved in the formation of a rigid and insoluble egg chorion by catalyzing chorion protein cross-linking through dityrosine formation and phenol oxidase-catalyzed chorion melanization. This is Chorion peroxidase (Pxt) from Drosophila melanogaster (Fruit fly).